The chain runs to 449 residues: UDP-N-acetylmuramate--L-alanine ligase (449 aa).

Position 121-127 (121-127 (GAHGKSS)) interacts with ATP.

Belongs to the MurCDEF family.

It is found in the cytoplasm. The enzyme catalyses UDP-N-acetyl-alpha-D-muramate + L-alanine + ATP = UDP-N-acetyl-alpha-D-muramoyl-L-alanine + ADP + phosphate + H(+). It participates in cell wall biogenesis; peptidoglycan biosynthesis. Functionally, cell wall formation. The protein is UDP-N-acetylmuramate--L-alanine ligase of Helicobacter pylori (strain J99 / ATCC 700824) (Campylobacter pylori J99).